The chain runs to 185 residues: Ribosome-recycling factor (185 aa).

This sequence belongs to the RRF family.

Its subcellular location is the cytoplasm. Functionally, responsible for the release of ribosomes from messenger RNA at the termination of protein biosynthesis. May increase the efficiency of translation by recycling ribosomes from one round of translation to another. The chain is Ribosome-recycling factor from Corynebacterium aurimucosum (strain ATCC 700975 / DSM 44827 / CIP 107346 / CN-1) (Corynebacterium nigricans).